A 217-amino-acid chain; its full sequence is Nucleoside diphosphate-linked moiety X motif 6 (217 aa).

In terms of domain architecture, Nudix hydrolase spans 42–177 (THQVGVAGAV…VAKLLLYGYN (136 aa)). The Nudix box signature appears at 77 to 98 (GLSDQGEDIGATAVREVLEETG).

It belongs to the Nudix hydrolase family. In terms of tissue distribution, detected in liver (at protein level).

The protein localises to the cytoplasm. The protein resides in the nucleus. Its subcellular location is the mitochondrion. Its function is as follows. May contribute to the regulation of cell proliferation. This chain is Nucleoside diphosphate-linked moiety X motif 6 (nudt6), found in Xenopus laevis (African clawed frog).